The primary structure comprises 226 residues: RNA pyrophosphohydrolase (226 aa).

One can recognise a Nudix hydrolase domain in the interval 6 to 149 (GFRPNVGIIL…KRGVYEMALT (144 aa)). The Nudix box signature appears at 38 to 59 (GGIDRGETPEQAMFRELHEEVG). The interval 197–226 (MELPPGASFDPDPRTGDGDPGMPGIHKPAG) is disordered.

This sequence belongs to the Nudix hydrolase family. RppH subfamily. A divalent metal cation is required as a cofactor.

Accelerates the degradation of transcripts by removing pyrophosphate from the 5'-end of triphosphorylated RNA, leading to a more labile monophosphorylated state that can stimulate subsequent ribonuclease cleavage. The sequence is that of RNA pyrophosphohydrolase from Paracidovorax citrulli (strain AAC00-1) (Acidovorax citrulli).